Reading from the N-terminus, the 364-residue chain is Paraneoplastic antigen Ma2 homolog (364 aa).

Residue Ala-2 is modified to N-acetylalanine. Positions 335-351 are enriched in acidic residues; that stretch reads EEEEATFENENTEEPEG. Residues 335–364 are disordered; that stretch reads EEEEATFENENTEEPEGGDGYGHWGNEAND.

It belongs to the PNMA family.

It is found in the nucleus. It localises to the nucleolus. The sequence is that of Paraneoplastic antigen Ma2 homolog (PNMA2) from Bos taurus (Bovine).